Here is an 850-residue protein sequence, read N- to C-terminus: Lon protease (850 aa).

The Lon N-terminal domain maps to 38–232 (LPVLPLRDVV…LLVGLVDGEI (195 aa)). Position 384–391 (384–391 (GPPGVGKT)) interacts with ATP. Residues 634 to 815 (ENEIGLVTGL…DEVLDLALER (182 aa)) enclose the Lon proteolytic domain. Catalysis depends on residues serine 721 and lysine 764. Positions 819–850 (PKKAGKEKARKTAPRVAVRGKSRSTPGTRVKH) are disordered. Basic residues predominate over residues 821–840 (KAGKEKARKTAPRVAVRGKS). The span at 841–850 (RSTPGTRVKH) shows a compositional bias: polar residues.

This sequence belongs to the peptidase S16 family. As to quaternary structure, homohexamer. Organized in a ring with a central cavity.

The protein resides in the cytoplasm. The enzyme catalyses Hydrolysis of proteins in presence of ATP.. Functionally, ATP-dependent serine protease that mediates the selective degradation of mutant and abnormal proteins as well as certain short-lived regulatory proteins. Required for cellular homeostasis and for survival from DNA damage and developmental changes induced by stress. Degrades polypeptides processively to yield small peptide fragments that are 5 to 10 amino acids long. Binds to DNA in a double-stranded, site-specific manner. The polypeptide is Lon protease (Xanthomonas oryzae pv. oryzae (strain KACC10331 / KXO85)).